A 98-amino-acid polypeptide reads, in one-letter code: Large ribosomal subunit protein uL23 (98 aa).

It belongs to the universal ribosomal protein uL23 family. In terms of assembly, part of the 50S ribosomal subunit. Contacts protein L29, and trigger factor when it is bound to the ribosome.

Functionally, one of the early assembly proteins it binds 23S rRNA. One of the proteins that surrounds the polypeptide exit tunnel on the outside of the ribosome. Forms the main docking site for trigger factor binding to the ribosome. This Ruegeria sp. (strain TM1040) (Silicibacter sp.) protein is Large ribosomal subunit protein uL23.